The primary structure comprises 239 residues: Putative transcriptional regulator of 2-aminoethylphosphonate degradation operons (239 aa).

The HTH gntR-type domain occupies Ile-8 to Glu-76. The H-T-H motif DNA-binding region spans Glu-36 to Ala-55.

The polypeptide is Putative transcriptional regulator of 2-aminoethylphosphonate degradation operons (phnR) (Salmonella paratyphi A (strain ATCC 9150 / SARB42)).